Here is a 417-residue protein sequence, read N- to C-terminus: NADH-quinone oxidoreductase subunit D (417 aa).

The protein belongs to the complex I 49 kDa subunit family. As to quaternary structure, NDH-1 is composed of 14 different subunits. Subunits NuoB, C, D, E, F, and G constitute the peripheral sector of the complex.

It localises to the cell inner membrane. The catalysed reaction is a quinone + NADH + 5 H(+)(in) = a quinol + NAD(+) + 4 H(+)(out). Its function is as follows. NDH-1 shuttles electrons from NADH, via FMN and iron-sulfur (Fe-S) centers, to quinones in the respiratory chain. The immediate electron acceptor for the enzyme in this species is believed to be ubiquinone. Couples the redox reaction to proton translocation (for every two electrons transferred, four hydrogen ions are translocated across the cytoplasmic membrane), and thus conserves the redox energy in a proton gradient. In Chromobacterium violaceum (strain ATCC 12472 / DSM 30191 / JCM 1249 / CCUG 213 / NBRC 12614 / NCIMB 9131 / NCTC 9757 / MK), this protein is NADH-quinone oxidoreductase subunit D.